The primary structure comprises 513 residues: ATP synthase subunit alpha, mitochondrial (513 aa).

170-177 (GDRQTGKT) lines the ATP pocket.

The protein belongs to the ATPase alpha/beta chains family. In terms of assembly, F-type ATPases have 2 components, CF(1) - the catalytic core - and CF(0) - the membrane proton channel. CF(1) has five subunits: alpha(3), beta(3), gamma(1), delta(1), epsilon(1). CF(0) has three main subunits: a, b and c.

The protein resides in the mitochondrion. It is found in the mitochondrion inner membrane. In terms of biological role, mitochondrial membrane ATP synthase (F(1)F(0) ATP synthase or Complex V) produces ATP from ADP in the presence of a proton gradient across the membrane which is generated by electron transport complexes of the respiratory chain. F-type ATPases consist of two structural domains, F(1) - containing the extramembraneous catalytic core, and F(0) - containing the membrane proton channel, linked together by a central stalk and a peripheral stalk. During catalysis, ATP synthesis in the catalytic domain of F(1) is coupled via a rotary mechanism of the central stalk subunits to proton translocation. Subunits alpha and beta form the catalytic core in F(1). Rotation of the central stalk against the surrounding alpha(3)beta(3) subunits leads to hydrolysis of ATP in three separate catalytic sites on the beta subunits. Subunit alpha does not bear the catalytic high-affinity ATP-binding sites. The sequence is that of ATP synthase subunit alpha, mitochondrial (ATPA) from Marchantia polymorpha (Common liverwort).